Reading from the N-terminus, the 216-residue chain is Uracil phosphoribosyltransferase (216 aa).

Residues Arg-85, Arg-110, and 135-143 (DPMVATGYS) each bind 5-phospho-alpha-D-ribose 1-diphosphate. Uracil is bound by residues Ile-200 and 205-207 (GDA). Asp-206 lines the 5-phospho-alpha-D-ribose 1-diphosphate pocket.

Belongs to the UPRTase family. Mg(2+) is required as a cofactor.

It carries out the reaction UMP + diphosphate = 5-phospho-alpha-D-ribose 1-diphosphate + uracil. Its pathway is pyrimidine metabolism; UMP biosynthesis via salvage pathway; UMP from uracil: step 1/1. Allosterically activated by GTP. In terms of biological role, catalyzes the conversion of uracil and 5-phospho-alpha-D-ribose 1-diphosphate (PRPP) to UMP and diphosphate. This chain is Uracil phosphoribosyltransferase, found in Burkholderia lata (strain ATCC 17760 / DSM 23089 / LMG 22485 / NCIMB 9086 / R18194 / 383).